The primary structure comprises 396 residues: Elongation factor Tu (396 aa).

The 196-residue stretch at 10-205 (KPHVNIGTIG…ACDDSIPDPE (196 aa)) folds into the tr-type G domain. The G1 stretch occupies residues 19–26 (GHVDHGKT). 19-26 (GHVDHGKT) lines the GTP pocket. Residue threonine 26 coordinates Mg(2+). The tract at residues 62–66 (GITIN) is G2. A G3 region spans residues 83-86 (DAPG). GTP contacts are provided by residues 83–87 (DAPGH) and 138–141 (NKCD). The tract at residues 138–141 (NKCD) is G4. The tract at residues 175–177 (SAL) is G5.

The protein belongs to the TRAFAC class translation factor GTPase superfamily. Classic translation factor GTPase family. EF-Tu/EF-1A subfamily. In terms of assembly, monomer.

It localises to the cytoplasm. The catalysed reaction is GTP + H2O = GDP + phosphate + H(+). GTP hydrolase that promotes the GTP-dependent binding of aminoacyl-tRNA to the A-site of ribosomes during protein biosynthesis. The sequence is that of Elongation factor Tu from Corynebacterium diphtheriae (strain ATCC 700971 / NCTC 13129 / Biotype gravis).